Here is a 295-residue protein sequence, read N- to C-terminus: Succinate dehydrogenase [ubiquinone] iron-sulfur subunit, mitochondrial (295 aa).

In terms of domain architecture, 2Fe-2S ferredoxin-type spans 67–144; that stretch reads EKPRLQSYTL…DTKIYPLPHM (78 aa). Positions 106, 111, 114, and 126 each coordinate [2Fe-2S] cluster. One can recognise a 4Fe-4S ferredoxin-type domain in the interval 185–215; the sequence is ERRRLDGLYECILCACCSTSCPSYWWNQDEY. Residues cysteine 195, cysteine 198, and cysteine 201 each contribute to the [4Fe-4S] cluster site. Cysteine 205 contributes to the [3Fe-4S] cluster binding site. Tryptophan 210 lines the a ubiquinone pocket. [3Fe-4S] cluster is bound by residues cysteine 252 and cysteine 258. [4Fe-4S] cluster is bound at residue cysteine 262.

It belongs to the succinate dehydrogenase/fumarate reductase iron-sulfur protein family. Component of complex II composed of four subunits: a flavoprotein (FP), an iron-sulfur protein (IP), and a cytochrome b composed of a large and a small subunit. Requires [2Fe-2S] cluster as cofactor. [3Fe-4S] cluster serves as cofactor. It depends on [4Fe-4S] cluster as a cofactor.

The protein localises to the mitochondrion inner membrane. The catalysed reaction is a quinone + succinate = fumarate + a quinol. It functions in the pathway carbohydrate metabolism; tricarboxylic acid cycle; fumarate from succinate (eukaryal route): step 1/1. In terms of biological role, iron-sulfur protein (IP) subunit of succinate dehydrogenase (SDH) that is involved in complex II of the mitochondrial electron transport chain and is responsible for transferring electrons from succinate to ubiquinone (coenzyme Q). This Mycosarcoma maydis (Corn smut fungus) protein is Succinate dehydrogenase [ubiquinone] iron-sulfur subunit, mitochondrial (SDH2).